We begin with the raw amino-acid sequence, 272 residues long: SKA complex subunit 1 homolog (272 aa).

Residues 48-75 (ALSSMELQVQSIKDRLREETEAIPKAKK) adopt a coiled-coil conformation.

It belongs to the SKA1 family.

The polypeptide is SKA complex subunit 1 homolog (Arabidopsis thaliana (Mouse-ear cress)).